Consider the following 128-residue polypeptide: Small ribosomal subunit protein uS11 (128 aa).

It belongs to the universal ribosomal protein uS11 family. As to quaternary structure, part of the 30S ribosomal subunit. Interacts with proteins S7 and S18. Binds to IF-3.

Its function is as follows. Located on the platform of the 30S subunit, it bridges several disparate RNA helices of the 16S rRNA. Forms part of the Shine-Dalgarno cleft in the 70S ribosome. This chain is Small ribosomal subunit protein uS11, found in Chromohalobacter salexigens (strain ATCC BAA-138 / DSM 3043 / CIP 106854 / NCIMB 13768 / 1H11).